Reading from the N-terminus, the 320-residue chain is Melanocyte-stimulating hormone receptor (320 aa).

Over M1 to E40 the chain is Extracellular. N-linked (GlcNAc...) asparagine glycosylation occurs at N32. Residues V41–I66 form a helical membrane-spanning segment. Topologically, residues A67 to P75 are cytoplasmic. Residues M76–L96 traverse the membrane as a helical segment. Over E97–N121 the chain is Extracellular. A helical membrane pass occupies residues V122–V143. The Cytoplasmic segment spans residues D144–R166. A helical transmembrane segment spans residues A167–Y186. Topologically, residues H187 to G194 are extracellular. Residues L195–L214 traverse the membrane as a helical segment. Topologically, residues A215–A243 are cytoplasmic. Residues A244–L269 form a helical membrane-spanning segment. Over C270 to N282 the chain is Extracellular. A helical transmembrane segment spans residues V283–F303. Over R304 to W320 the chain is Cytoplasmic.

This sequence belongs to the G-protein coupled receptor 1 family. As to quaternary structure, interacts with MGRN1, but does not undergo MGRN1-mediated ubiquitination; this interaction competes with GNAS-binding and thus inhibits agonist-induced cAMP production. Interacts with OPN3; the interaction results in a decrease in MC1R-mediated cAMP signaling and ultimately a decrease in melanin production in melanocytes.

The protein resides in the cell membrane. Receptor for MSH (alpha, beta and gamma) and ACTH. The activity of this receptor is mediated by G proteins which activate adenylate cyclase. Mediates melanogenesis, the production of eumelanin (black/brown) and phaeomelanin (red/yellow), via regulation of cAMP signaling in melanocytes. This Sus scrofa (Pig) protein is Melanocyte-stimulating hormone receptor (MC1R).